The sequence spans 456 residues: Glutamyl-tRNA(Gln) amidotransferase subunit A (456 aa).

Catalysis depends on charge relay system residues Lys-74 and Ser-149. The active-site Acyl-ester intermediate is Ser-173.

This sequence belongs to the amidase family. GatA subfamily. In terms of assembly, heterotrimer of A, B and C subunits.

The enzyme catalyses L-glutamyl-tRNA(Gln) + L-glutamine + ATP + H2O = L-glutaminyl-tRNA(Gln) + L-glutamate + ADP + phosphate + H(+). Functionally, allows the formation of correctly charged Gln-tRNA(Gln) through the transamidation of misacylated Glu-tRNA(Gln) in organisms which lack glutaminyl-tRNA synthetase. The reaction takes place in the presence of glutamine and ATP through an activated gamma-phospho-Glu-tRNA(Gln). This chain is Glutamyl-tRNA(Gln) amidotransferase subunit A, found in Methanobrevibacter smithii (strain ATCC 35061 / DSM 861 / OCM 144 / PS).